The chain runs to 1264 residues: P-type sodium-transporting ATPase4 (1264 aa).

Residues 1–12 (MSSQNNNKQGGQ) show a composition bias toward polar residues. Residues 1–102 (MSSQNNNKQG…INGEKNDDNN (102 aa)) are disordered. Composition is skewed to basic and acidic residues over residues 15–42 (NNKK…DELN) and 50–64 (NDMK…KKNE). A run of 8 helical transmembrane segments spans residues 165-185 (VWLI…LVAA), 186-206 (VASL…IVTL), 359-379 (GLIG…AVII), 393-413 (FVII…GLPM), 923-943 (FVCF…VAIV), 1006-1026 (IFEA…CTGF), 1203-1223 (CSIS…TSIL), and 1226-1246 (TCLL…NLFL).

The protein belongs to the cation transport ATPase (P-type) (TC 3.A.3) family.

The protein localises to the cell membrane. It carries out the reaction Na(+)(in) + ATP + H2O = Na(+)(out) + ADP + phosphate + H(+). Inhibited by cipargamin and other spiroindolone compounds. Inhibited by 4-cyano-3-methylisoquinoline derivatives MB14 and MB10 but not RK18. Inhibited by (+)-SJ733, a dihydroisoquinolone compound. In terms of biological role, sodium-exporting ATPase. Required for the extrusion of Na(+) from the intraerythrocytic parasites to maintain a low cytosolic concentration of Na(+). The chain is P-type sodium-transporting ATPase4 from Plasmodium falciparum (isolate 3D7).